The following is a 100-amino-acid chain: Small ribosomal subunit protein uS14c (100 aa).

It belongs to the universal ribosomal protein uS14 family. Part of the 30S ribosomal subunit.

It is found in the plastid. The protein localises to the chloroplast. Its function is as follows. Binds 16S rRNA, required for the assembly of 30S particles. The sequence is that of Small ribosomal subunit protein uS14c from Illicium oligandrum (Star anise).